The primary structure comprises 485 residues: Phosphoglucosamine mutase (485 aa).

Residue Ser-133 is the Phosphoserine intermediate of the active site. Mg(2+) contacts are provided by Ser-133, Asp-274, Asp-276, and Asp-278. Ser-133 carries the post-translational modification Phosphoserine.

This sequence belongs to the phosphohexose mutase family. It depends on Mg(2+) as a cofactor. In terms of processing, activated by phosphorylation.

It catalyses the reaction alpha-D-glucosamine 1-phosphate = D-glucosamine 6-phosphate. Its function is as follows. Catalyzes the conversion of glucosamine-6-phosphate to glucosamine-1-phosphate. This chain is Phosphoglucosamine mutase, found in Rippkaea orientalis (strain PCC 8801 / RF-1) (Cyanothece sp. (strain PCC 8801)).